A 302-amino-acid polypeptide reads, in one-letter code: Small ribosomal subunit biogenesis GTPase RsgA (302 aa).

The 161-residue stretch at 69 to 229 (KNLLIRPKVA…VGDTPGFSKV (161 aa)) folds into the CP-type G domain. GTP-binding positions include 118-121 (NKID) and 172-180 (GPSGVGKSS). Residues Cys252, Cys257, His259, and Cys265 each coordinate Zn(2+).

It belongs to the TRAFAC class YlqF/YawG GTPase family. RsgA subfamily. As to quaternary structure, monomer. Associates with 30S ribosomal subunit, binds 16S rRNA. It depends on Zn(2+) as a cofactor.

It is found in the cytoplasm. One of several proteins that assist in the late maturation steps of the functional core of the 30S ribosomal subunit. Helps release RbfA from mature subunits. May play a role in the assembly of ribosomal proteins into the subunit. Circularly permuted GTPase that catalyzes slow GTP hydrolysis, GTPase activity is stimulated by the 30S ribosomal subunit. This Aquifex aeolicus (strain VF5) protein is Small ribosomal subunit biogenesis GTPase RsgA.